Reading from the N-terminus, the 511-residue chain is N-acetylgalactosamine-6-O-sulfatase (511 aa).

3-oxoalanine (Ser) is present on Ser83.

This sequence belongs to the sulfatase family. The conversion to 3-oxoalanine (also known as C-formylglycine, FGly), of a serine or cysteine residue in prokaryotes and of a cysteine residue in eukaryotes, is critical for catalytic activity.

Functionally, exosulfatase involved in the degradation of the glycosaminoglycans (GAGs) chondroitin sulfate (CS) and dermatan sulfate (DS). Catalyzes the hydrolysis of the 6-sulfate groups of the N-acetyl-D-galactosamine 6-sulfate units. GAG-specific sulfatases play a key role in the persistence of the major human gut symbiont B.thetaiotaomicron in the host gastrointestinal tract. This chain is N-acetylgalactosamine-6-O-sulfatase, found in Bacteroides thetaiotaomicron (strain ATCC 29148 / DSM 2079 / JCM 5827 / CCUG 10774 / NCTC 10582 / VPI-5482 / E50).